A 129-amino-acid chain; its full sequence is Small ribosomal subunit protein uS8my (129 aa).

The protein belongs to the universal ribosomal protein uS8 family. In terms of assembly, component of the mitochondrial ribosome small subunit.

The protein resides in the mitochondrion. The sequence is that of Small ribosomal subunit protein uS8my (RPS15AE) from Arabidopsis thaliana (Mouse-ear cress).